The primary structure comprises 257 residues: Short chain dehydrogenase ausX (257 aa).

NADP(+) contacts are provided by Ile-11, Asp-57, Arg-119, Tyr-151, Lys-155, and Val-184. Catalysis depends on Tyr-151, which acts as the Proton acceptor. The active-site Lowers pKa of active site Tyr is the Lys-155.

This sequence belongs to the short-chain dehydrogenases/reductases (SDR) family.

It participates in secondary metabolite biosynthesis; terpenoid biosynthesis. Functionally, short chain dehydrogenase; part of the gene cluster that mediates the biosynthesis of calidodehydroaustin, a fungal meroterpenoid. The first step of the pathway is the synthesis of 3,5-dimethylorsellinic acid by the polyketide synthase ausA. 3,5-dimethylorsellinic acid is then prenylated by the polyprenyl transferase ausN. Further epoxidation by the FAD-dependent monooxygenase ausM and cyclization by the probable terpene cyclase ausL lead to the formation of protoaustinoid A. Protoaustinoid A is then oxidized to spiro-lactone preaustinoid A3 by the combined action of the FAD-binding monooxygenases ausB and ausC, and the dioxygenase ausE. Acid-catalyzed keto-rearrangement and ring contraction of the tetraketide portion of preaustinoid A3 by ausJ lead to the formation of preaustinoid A4. The aldo-keto reductase ausK, with the help of ausH, is involved in the next step by transforming preaustinoid A4 into isoaustinone which is in turn hydroxylated by the P450 monooxygenase ausI to form austinolide. The cytochrome P450 monooxygenase ausG modifies austinolide to austinol. Austinol is further acetylated to austin by the O-acetyltransferase ausP, which spontaneously changes to dehydroaustin. The cytochrome P450 monooxygenase ausR then converts dehydroaustin is into 7-dehydrodehydroaustin. The hydroxylation catalyzed by ausR permits the O-acetyltransferase ausQ to add an additional acetyl group to the molecule, leading to the formation of acetoxydehydroaustin. The short chain dehydrogenase ausT catalyzes the reduction of the double bond present between carbon atoms 1 and 2 to convert 7-dehydrodehydroaustin into 1,2-dihydro-7-hydroxydehydroaustin. AusQ catalyzes not only an acetylation reaction but also the addition of the PKS ausV diketide product to 1,2-dihydro-7-hydroxydehydroaustin, forming precalidodehydroaustin. Finally, the iron/alpha-ketoglutarate-dependent dioxygenase converts precalidodehydroaustin into calidodehydroaustin. The polypeptide is Short chain dehydrogenase ausX (Aspergillus calidoustus).